A 482-amino-acid polypeptide reads, in one-letter code: O-methyltransferase tpcA (482 aa).

S-adenosyl-L-methionine is bound by residues 293–294 (GG), aspartate 316, 348–349 (SF), and arginine 364. Residue histidine 368 is the Proton acceptor of the active site.

The protein belongs to the class I-like SAM-binding methyltransferase superfamily. Cation-independent O-methyltransferase family. In terms of tissue distribution, specifically expressed in conidia.

The protein operates within secondary metabolite biosynthesis. O-methyltransferase; part of the gene cluster that mediates the biosynthesis of trypacidin, a mycotoxin with antiprotozoal activity and that plays a role in the infection process. The pathway begins with the synthesis of atrochrysone thioester by the polyketide synthase (PKS) tpcC. The atrochrysone carboxyl ACP thioesterase tpcB then breaks the thioester bond and releases the atrochrysone carboxylic acid from tpcC. The decarboxylase tpcK converts atrochrysone carboxylic acid to atrochrysone which is further reduced into emodin anthrone. The next step is performed by the emodin anthrone oxygenase tpcL that catalyzes the oxidation of emodinanthrone to emodin. Emodin O-methyltransferase encoded by tpcA catalyzes methylation of the 8-hydroxy group of emodin to form questin. Ring cleavage of questin by questin oxidase tpcI leads to desmethylsulochrin via several intermediates including questin epoxide. Another methylation step catalyzed by tpcM leads to the formation of sulochrin which is further converted to monomethylsulfochrin by tpcH. Finally, the tpcJ catalyzes the conversion of monomethylsulfochrin to trypacidin. Trypacidin is toxic for human pulmonary and bronchial epithelial cells by initiating the intracellular formation of nitric oxide (NO) and hydrogen peroxide (H(2)O(2)), thus triggering host necrotic cell death. The trypacidin pathway is also able to produce endocrocin via a distinct route from the endocrocin Enc pathway. The protein is O-methyltransferase tpcA of Aspergillus fumigatus (strain ATCC MYA-4609 / CBS 101355 / FGSC A1100 / Af293) (Neosartorya fumigata).